The chain runs to 221 residues: Imidazoleglycerol-phosphate dehydratase (221 aa).

Belongs to the imidazoleglycerol-phosphate dehydratase family.

The enzyme catalyses D-erythro-1-(imidazol-4-yl)glycerol 3-phosphate = 3-(imidazol-4-yl)-2-oxopropyl phosphate + H2O. It functions in the pathway amino-acid biosynthesis; L-histidine biosynthesis; L-histidine from 5-phospho-alpha-D-ribose 1-diphosphate: step 6/9. This Kluyveromyces lactis (strain ATCC 8585 / CBS 2359 / DSM 70799 / NBRC 1267 / NRRL Y-1140 / WM37) (Yeast) protein is Imidazoleglycerol-phosphate dehydratase (HIS3).